The primary structure comprises 469 residues: Siroheme synthase (469 aa).

The segment at 1–211 (MSTQLQTWDF…GRTDKARAML (211 aa)) is precorrin-2 dehydrogenase /sirohydrochlorin ferrochelatase. NAD(+) is bound by residues 29-30 (EQ) and 50-51 (DP). Serine 136 carries the post-translational modification Phosphoserine. A uroporphyrinogen-III C-methyltransferase region spans residues 227–469 (GEVYLVGAGP…TLRDRLRWMD (243 aa)). Proline 236 contacts S-adenosyl-L-methionine. Catalysis depends on aspartate 259, which acts as the Proton acceptor. The active-site Proton donor is the lysine 281. Residues 312–314 (GGD), isoleucine 317, 342–343 (TA), methionine 394, and glycine 423 each bind S-adenosyl-L-methionine.

It in the N-terminal section; belongs to the precorrin-2 dehydrogenase / sirohydrochlorin ferrochelatase family. The protein in the C-terminal section; belongs to the precorrin methyltransferase family.

It catalyses the reaction uroporphyrinogen III + 2 S-adenosyl-L-methionine = precorrin-2 + 2 S-adenosyl-L-homocysteine + H(+). The catalysed reaction is precorrin-2 + NAD(+) = sirohydrochlorin + NADH + 2 H(+). It carries out the reaction siroheme + 2 H(+) = sirohydrochlorin + Fe(2+). It functions in the pathway cofactor biosynthesis; adenosylcobalamin biosynthesis; precorrin-2 from uroporphyrinogen III: step 1/1. It participates in cofactor biosynthesis; adenosylcobalamin biosynthesis; sirohydrochlorin from precorrin-2: step 1/1. Its pathway is porphyrin-containing compound metabolism; siroheme biosynthesis; precorrin-2 from uroporphyrinogen III: step 1/1. The protein operates within porphyrin-containing compound metabolism; siroheme biosynthesis; siroheme from sirohydrochlorin: step 1/1. It functions in the pathway porphyrin-containing compound metabolism; siroheme biosynthesis; sirohydrochlorin from precorrin-2: step 1/1. Functionally, multifunctional enzyme that catalyzes the SAM-dependent methylations of uroporphyrinogen III at position C-2 and C-7 to form precorrin-2 via precorrin-1. Then it catalyzes the NAD-dependent ring dehydrogenation of precorrin-2 to yield sirohydrochlorin. Finally, it catalyzes the ferrochelation of sirohydrochlorin to yield siroheme. This chain is Siroheme synthase, found in Hahella chejuensis (strain KCTC 2396).